We begin with the raw amino-acid sequence, 36 residues long: Photosystem I reaction center subunit VIII (36 aa).

A helical membrane pass occupies residues 6–26 (LPSIFVPLVGLVFPAIAMASL).

The protein belongs to the PsaI family.

It is found in the plastid. The protein localises to the chloroplast thylakoid membrane. May help in the organization of the PsaL subunit. The protein is Photosystem I reaction center subunit VIII of Drimys granadensis.